Reading from the N-terminus, the 230-residue chain is Ribosome biogenesis protein SLX9 homolog (230 aa).

Residues 1–11 are compositionally biased toward basic residues; the sequence is MGKVRGLRARV. Disordered stretches follow at residues 1–42 and 155–187; these read MGKV…SAAG and LGLEAGSRRQARSRESNKPRPSELSRMSAAQRQ. Over residues 25–38 the composition is skewed to pro residues; that stretch reads GPAPPAPEATPPPA. Residue Thr34 is modified to Phosphothreonine. Residues 166–177 are compositionally biased toward basic and acidic residues; the sequence is RSRESNKPRPSE. Ser203 bears the Phosphoserine mark.

It belongs to the SLX9 family. Not detected in any tested tissue.

The protein resides in the nucleus. It localises to the nucleolus. Its function is as follows. May be involved in ribosome biogenesis. The chain is Ribosome biogenesis protein SLX9 homolog from Homo sapiens (Human).